A 362-amino-acid chain; its full sequence is DNA polymerase IV (362 aa).

The UmuC domain occupies 6–187; that stretch reads IIHVDMDAFY…LPVSSFHGVG (182 aa). Mg(2+)-binding residues include D10 and D105. Residue E106 is part of the active site.

This sequence belongs to the DNA polymerase type-Y family. As to quaternary structure, monomer. It depends on Mg(2+) as a cofactor.

The protein localises to the cytoplasm. It carries out the reaction DNA(n) + a 2'-deoxyribonucleoside 5'-triphosphate = DNA(n+1) + diphosphate. In terms of biological role, poorly processive, error-prone DNA polymerase involved in untargeted mutagenesis. Copies undamaged DNA at stalled replication forks, which arise in vivo from mismatched or misaligned primer ends. These misaligned primers can be extended by PolIV. Exhibits no 3'-5' exonuclease (proofreading) activity. May be involved in translesional synthesis, in conjunction with the beta clamp from PolIII. In Leptospira interrogans serogroup Icterohaemorrhagiae serovar Lai (strain 56601), this protein is DNA polymerase IV.